A 429-amino-acid polypeptide reads, in one-letter code: Palmitoyltransferase ZDHHC23 (429 aa).

Over 1–81 the chain is Cytoplasmic; it reads MKPVKKKKTE…RIPWLRGAKK (81 aa). The chain crosses the membrane as a helical span at residues 82–102; that stretch reads VNISILPPLVLLPVLLRVASW. His-103 is a topological domain (lumenal). A helical transmembrane segment spans residues 104 to 124; it reads FLLGVVVLTSLPMLALWYYYL. Over 125 to 130 the chain is Cytoplasmic; sequence THRRKE. A helical membrane pass occupies residues 131 to 151; that stretch reads QTLFFLSLGLFSLGYMYYVFL. At 152–159 the chain is on the lumenal side; it reads QEVVPQGH. The helical transmembrane segment at 160–180 threads the bilayer; it reads VGPAQLALLTCGLFLILVALY. Topologically, residues 181–296 are cytoplasmic; that stretch reads RAKKNPGYLS…NSCVGESNHQ (116 aa). The tract at residues 212-247 is disordered; that stretch reads QEKTKGFPGTDTSGSLNNRTLKDDAKGSSRVGLDSP. The segment covering 221 to 230 has biased composition (polar residues); that stretch reads TDTSGSLNNR. In terms of domain architecture, DHHC spans 253–303; that stretch reads DWCAKCQLVRPARAWHCRICGICVRRMDHHCVWINSCVGESNHQAFILALS. Cys-283 serves as the catalytic S-palmitoyl cysteine intermediate. Residues 297–317 form a helical membrane-spanning segment; sequence AFILALSIFLLTSVYGISLTL. At 318 to 347 the chain is on the lumenal side; that stretch reads NTICRDRSLFTALFYCPGVYANYSSALSFT. The chain crosses the membrane as a helical span at residues 348–368; the sequence is CVWYSVIITAGMAYIFLIQLI. Residues 369 to 429 lie on the Cytoplasmic side of the membrane; the sequence is NISYNVTERE…TVHTPAEDIV (61 aa). The interaction with NOS1 stretch occupies residues 426–429; the sequence is EDIV.

Belongs to the DHHC palmitoyltransferase family. Interacts with NOS1. In terms of tissue distribution, expressed in the brain (at protein level), with highest levels in olfactory bulb, piriform cortex and hippocampus.

It localises to the golgi apparatus membrane. Its subcellular location is the golgi apparatus. It is found in the trans-Golgi network membrane. It catalyses the reaction L-cysteinyl-[protein] + hexadecanoyl-CoA = S-hexadecanoyl-L-cysteinyl-[protein] + CoA. In terms of biological role, palmitoyltransferase that could catalyze the addition of palmitate onto various protein substrates and be involved in a variety of cellular processes. Palmitoyltransferase that mediates palmitoylation of KCNMA1, regulating localization of KCNMA1 to the plasma membrane. May be involved in NOS1 regulation and targeting to the synaptic membrane. The chain is Palmitoyltransferase ZDHHC23 from Rattus norvegicus (Rat).